The following is a 320-amino-acid chain: Malate dehydrogenase (320 aa).

Residues 10–15 (GSGMIG) and D34 contribute to the NAD(+) site. Substrate-binding residues include R83 and R89. NAD(+)-binding positions include N96 and 119–121 (ITN). Positions 121 and 152 each coordinate substrate. Residue H176 is the Proton acceptor of the active site.

This sequence belongs to the LDH/MDH superfamily. MDH type 3 family.

It catalyses the reaction (S)-malate + NAD(+) = oxaloacetate + NADH + H(+). Its function is as follows. Catalyzes the reversible oxidation of malate to oxaloacetate. This is Malate dehydrogenase from Maricaulis maris (strain MCS10) (Caulobacter maris).